Reading from the N-terminus, the 419-residue chain is Sphingomyelin phosphodiesterase 2 (419 aa).

E49 is a binding site for Mg(2+). H272 functions as the Proton acceptor in the catalytic mechanism. 2 helical membrane-spanning segments follow: residues 326 to 346 (FSGYVIVWGLSLLVLLCVLAA) and 354 to 374 (AIILCIPSVGLVLVAGAVYLF).

It belongs to the neutral sphingomyelinase family. Mg(2+) serves as cofactor. In terms of tissue distribution, although widely expressed in all tissues examined, except the spleen, high enzymatic activity occurs only in the brain.

The protein resides in the cell membrane. It carries out the reaction a sphingomyelin + H2O = phosphocholine + an N-acylsphing-4-enine + H(+). It catalyses the reaction an N-(acyl)-sphingosylphosphocholine + H2O = an N-acyl-sphingoid base + phosphocholine + H(+). The catalysed reaction is 1-O-octadecyl-sn-glycero-3-phosphocholine + H2O = 1-O-octadecyl-sn-glycerol + phosphocholine + H(+). The enzyme catalyses 1-hexadecanoyl-sn-glycero-3-phosphocholine + H2O = 1-hexadecanoyl-sn-glycerol + phosphocholine + H(+). It carries out the reaction a sphingosylphosphocholine + H2O = a sphingoid base + phosphocholine + H(+). It catalyses the reaction 1-O-hexadecyl-sn-glycero-3-phosphocholine + H2O = 1-O-hexadecyl-sn-glycerol + phosphocholine + H(+). Its pathway is lipid metabolism; sphingolipid metabolism. Activated by arachidonic acid. Functionally, catalyzes, at least in vitro, the hydrolysis of sphingomyelin to form ceramide and phosphocholine. Also hydrolyzes 1-O-alkyl-2-lyso-sn-glycero-3-phosphocholine (lyso-platelet-activating factor) in vivo. Also acts on 1-acyl-2-lyso-sn-glycero-3-phosphocholine (lyso-PC) and sphingosylphosphocholine. The sequence is that of Sphingomyelin phosphodiesterase 2 from Mus musculus (Mouse).